The primary structure comprises 287 residues: MDVDELISSSKLLKHWPSLFITLALIWIVKRLFFKGNRVLKTYNLDEQVEEEVEHFADLGDELQPALEDKPHVPFVPGQNLNPNGAKRLYELMRGRRSIRSFNSHPKPDLSVIEDCIRAAGTAPSGAHTEPWTYCVVQEPELKRSIREIVEQEELVNYSQRMHPQWVTDLRPLQTNHVKEYLTEAPYLILIFKQTYGLSENGKRMRRHYYNEISTSIAAGILLCALQAAGLASLVTTPLNCGPALRNLLGRPVNEKLLILLPVGYPKDGCTVPDLARKNLSNIMVTF.

The chain crosses the membrane as a helical span at residues 15 to 34 (HWPSLFITLALIWIVKRLFF). Residues 96–100 (RRSIR), Ser-125, and 125–126 (SG) each bind FMN. Ala-127, Glu-154, Tyr-158, and Lys-179 together coordinate 3,5-diiodo-L-tyrosine. Positions 127, 154, 158, and 179 each coordinate 3-iodo-L-tyrosine. Residues 235–237 (VTT) and Arg-277 contribute to the FMN site.

Belongs to the nitroreductase family. As to quaternary structure, homodimer. FMN is required as a cofactor. As to expression, expressed in spermatocytes.

The protein localises to the cell membrane. The enzyme catalyses 2 iodide + L-tyrosine + 2 NADP(+) = 3,5-diiodo-L-tyrosine + 2 NADPH + H(+). It carries out the reaction iodide + L-tyrosine + NADP(+) = 3-iodo-L-tyrosine + NADPH. The catalysed reaction is 3-iodo-L-tyrosine + iodide + NADP(+) = 3,5-diiodo-L-tyrosine + NADPH + H(+). It catalyses the reaction L-tyrosine + chloride + NADP(+) = 3-chloro-L-tyrosine + NADPH. The enzyme catalyses bromide + L-tyrosine + NADP(+) = 3-bromo-L-tyrosine + NADPH. Its function is as follows. Catalyzes the dehalogenation of halotyrosines such as 3-bromo-L-tyrosine, 3-chloro-L-tyrosine, 3-iodo-L-tyrosine and 3,5-diiodo-L-tyrosine. Activity towards 3-fluoro-L-tyrosine is weak. Important for male and female fertility. May be involved in maintaining the viability of sperm, both during development in the testes and storage in the female spermatheca. In Drosophila melanogaster (Fruit fly), this protein is Iodotyrosine deiodinase.